Here is a 523-residue protein sequence, read N- to C-terminus: Translation initiation factor eIF2B subunit delta (523 aa).

Positions 1 to 147 are disordered; sequence MAAVAVAVRE…PSGVKRLPEY (147 aa). An N-acetylalanine modification is found at Ala2. At Ser12 the chain carries Phosphoserine. Basic and acidic residues predominate over residues 30 to 40; that stretch reads EMTKEEKLQLR. The span at 41-51 shows a compositional bias: basic residues; that stretch reads KEKKQQKKKRK. Position 86 is a phosphothreonine (Thr86). The span at 87–121 shows a compositional bias: basic and acidic residues; the sequence is PREKVPAGRSKAELRAERRAKQEAERALKQARKGE. Residue Ser130 is modified to Phosphoserine. Positions 170–179 are may bind the chemical integrated stress response (ISR) inhibitor ISRIB; it reads RKDYGSKVSL.

The protein belongs to the eIF-2B alpha/beta/delta subunits family. Component of the translation initiation factor 2B (eIF2B) complex which is a heterodecamer of two sets of five different subunits: alpha, beta, gamma, delta and epsilon. Subunits alpha, beta and delta comprise a regulatory subcomplex and subunits epsilon and gamma comprise a catalytic subcomplex. Within the complex, the hexameric regulatory complex resides at the center, with the two heterodimeric catalytic subcomplexes bound on opposite sides.

The protein localises to the cytoplasm. Its subcellular location is the cytosol. With respect to regulation, activated by the chemical integrated stress response (ISR) inhibitor ISRIB which stimulates guanine nucleotide exchange factor activity for both phosphorylated and unphosphorylated eIF2. Functionally, acts as a component of the translation initiation factor 2B (eIF2B) complex, which catalyzes the exchange of GDP for GTP on eukaryotic initiation factor 2 (eIF2) gamma subunit. Its guanine nucleotide exchange factor activity is repressed when bound to eIF2 complex phosphorylated on the alpha subunit, thereby limiting the amount of methionyl-initiator methionine tRNA available to the ribosome and consequently global translation is repressed. The sequence is that of Translation initiation factor eIF2B subunit delta (EIF2B4) from Homo sapiens (Human).